The following is a 373-amino-acid chain: MQNLVSNRRKSKRIYVGNVPIGDGAPIAVQSMTNTQTTNVIATVNQIKALERLGADIVRVSVPTLHAAEQFKLIKEQVDVPLVADIHFDYRIALKVAKYGVNCLRINPGNIGNKKRIRSVVDCARDHHIPIRIGINAGSLEKDLQNKYSKPTPEVLLESALRQIDILDRLNFDQFKVSVKASDVLLAVRSYRLLASQIDQPLHIGITEAGGARSGAVKSAIGIGLLLSEGIGDTLRVSLASDPIEEVKVAFDILKSLRIRTRGINFIACPTCSRQEFDVIGTVKELEQRLEDIVTPMDISIIGCIVNGLGEALMSNIGVTGGPRNSSFYEDGIRQHHRFDNKFIIDQLEARIRAKAMMLEENNKITVINLPKK.

Positions 269, 272, 304, and 311 each coordinate [4Fe-4S] cluster.

It belongs to the IspG family. It depends on [4Fe-4S] cluster as a cofactor.

The enzyme catalyses (2E)-4-hydroxy-3-methylbut-2-enyl diphosphate + oxidized [flavodoxin] + H2O + 2 H(+) = 2-C-methyl-D-erythritol 2,4-cyclic diphosphate + reduced [flavodoxin]. It functions in the pathway isoprenoid biosynthesis; isopentenyl diphosphate biosynthesis via DXP pathway; isopentenyl diphosphate from 1-deoxy-D-xylulose 5-phosphate: step 5/6. Its function is as follows. Converts 2C-methyl-D-erythritol 2,4-cyclodiphosphate (ME-2,4cPP) into 1-hydroxy-2-methyl-2-(E)-butenyl 4-diphosphate. This chain is 4-hydroxy-3-methylbut-2-en-1-yl diphosphate synthase (flavodoxin), found in Baumannia cicadellinicola subsp. Homalodisca coagulata.